We begin with the raw amino-acid sequence, 217 residues long: Oxygen-evolving enhancer protein 3, chloroplastic (217 aa).

Disordered regions lie at residues 1–25 (MAQA…RRAG) and 73–95 (PIKL…SDQA). Residues 1–63 (MAQAMASMTG…ATGIAGGALA (63 aa)) constitute a chloroplast transit peptide.

It belongs to the PsbQ family.

Its subcellular location is the plastid. It is found in the chloroplast thylakoid membrane. The sequence is that of Oxygen-evolving enhancer protein 3, chloroplastic from Oryza sativa subsp. indica (Rice).